Reading from the N-terminus, the 274-residue chain is Cytochrome b-c1 complex subunit Rieske, mitochondrial (274 aa).

The tract at residues 29–49 (XXXXXXXXTPEPPVLDPKRPI) is disordered. The Mitochondrial matrix portion of the chain corresponds to 79-103 (SHTDIKVPDFSDYRRSEVLDKTKSS). Residues 104–140 (RESSDARKVFSYMVTATTAVGVTYAAKSIVTQFISSM) traverse the membrane as a helical segment. Over 141–274 (SASADVLAMS…FLSDDMVVVG (134 aa)) the chain is Mitochondrial intermembrane. The region spanning 187–272 (EAAVELSQLR…YEFLSDDMVV (86 aa)) is the Rieske domain. Cysteine 217, histidine 219, cysteine 236, histidine 239, and serine 241 together coordinate [2Fe-2S] cluster. Cysteine 222 and cysteine 238 are oxidised to a cystine.

Belongs to the Rieske iron-sulfur protein family. As to quaternary structure, component of the ubiquinol-cytochrome c oxidoreductase (cytochrome b-c1 complex, complex III, CIII), a multisubunit enzyme composed of 11 subunits. The complex is composed of 3 respiratory subunits cytochrome b, cytochrome c1 and Rieske protein UQCRFS1, 2 core protein subunits UQCRC1/QCR1 and UQCRC2/QCR2, and 6 low-molecular weight protein subunits UQCRH/QCR6, UQCRB/QCR7, UQCRQ/QCR8, UQCR10/QCR9, UQCR11/QCR10 and subunit 9, the cleavage product of Rieske protein UQCRFS1. The complex exists as an obligatory dimer and forms supercomplexes (SCs) in the inner mitochondrial membrane with NADH-ubiquinone oxidoreductase (complex I, CI) and cytochrome c oxidase (complex IV, CIV), resulting in different assemblies (supercomplex SCI(1)III(2)IV(1) and megacomplex MCI(2)III(2)IV(2)). Incorporation of the Rieske protein UQCRFS1 is the penultimate step in complex III assembly. Interacts with TTC19, which is involved in the clearance of UQCRFS1 fragments. In terms of assembly, component of the ubiquinol-cytochrome c oxidoreductase (cytochrome b-c1 complex, complex III, CIII). Subunit 9 corresponds to the mitochondrial targeting sequence (MTS) of Rieske protein UQCRFS1. It is retained after processing and incorporated inside complex III, where it remains bound to the complex and localizes between the 2 core subunits UQCRC1/QCR1 and UQCRC2/QCR2. The cofactor is [2Fe-2S] cluster. Proteolytic processing is necessary for the correct insertion of UQCRFS1 in the complex III dimer. Several fragments are generated during UQCRFS1 insertion, most probably due to the endogenous matrix-processing peptidase (MPP) activity of the 2 core protein subunits UQCRC1/QCR1 and UQCRC2/QCR2, which are homologous to the 2 mitochondrial-processing peptidase (MPP) subunits beta-MPP and alpha-MPP respectively. The action of the protease is also necessary for the clearance of the UQCRFS1 fragments.

It is found in the mitochondrion inner membrane. It catalyses the reaction a quinol + 2 Fe(III)-[cytochrome c](out) = a quinone + 2 Fe(II)-[cytochrome c](out) + 2 H(+)(out). Its function is as follows. Component of the ubiquinol-cytochrome c oxidoreductase, a multisubunit transmembrane complex that is part of the mitochondrial electron transport chain which drives oxidative phosphorylation. The respiratory chain contains 3 multisubunit complexes succinate dehydrogenase (complex II, CII), ubiquinol-cytochrome c oxidoreductase (cytochrome b-c1 complex, complex III, CIII) and cytochrome c oxidase (complex IV, CIV), that cooperate to transfer electrons derived from NADH and succinate to molecular oxygen, creating an electrochemical gradient over the inner membrane that drives transmembrane transport and the ATP synthase. The cytochrome b-c1 complex catalyzes electron transfer from ubiquinol to cytochrome c, linking this redox reaction to translocation of protons across the mitochondrial inner membrane, with protons being carried across the membrane as hydrogens on the quinol. In the process called Q cycle, 2 protons are consumed from the matrix, 4 protons are released into the intermembrane space and 2 electrons are passed to cytochrome c. The Rieske protein is a catalytic core subunit containing a [2Fe-2S] iron-sulfur cluster. It cycles between 2 conformational states during catalysis to transfer electrons from the quinol bound in the Q(0) site in cytochrome b to cytochrome c1. Incorporation of UQCRFS1 is the penultimate step in complex III assembly. Functionally, component of the ubiquinol-cytochrome c oxidoreductase (cytochrome b-c1 complex, complex III, CIII). UQCRFS1 undergoes proteolytic processing once it is incorporated in the complex III dimer. One of the fragments, called subunit 9, corresponds to its mitochondrial targeting sequence (MTS). The proteolytic processing is necessary for the correct insertion of UQCRFS1 in the complex III dimer, but the persistence of UQCRFS1-derived fragments may prevent newly imported UQCRFS1 to be processed and assembled into complex III and is detrimental for the complex III structure and function. This is Cytochrome b-c1 complex subunit Rieske, mitochondrial (UQCRFS1) from Saimiri sciureus (Common squirrel monkey).